Reading from the N-terminus, the 180-residue chain is MSENSTPERVVLLDEQHQPTGTALKSEVHTEATPLHLAFSCHVLNPDGRVLVTRRALSKRTWPGVWSNSFCGHPGPHESFEDAIARRARQELGLEIRNLTVVVPEFQYRATDATGVVENEFCPVFVAVTDTDPQPAESEVAEYAWTAPRDLIAAVESAPYAFSPWLGDQVREPALREALG.

Residues histidine 29 and histidine 36 each coordinate Mn(2+). Cysteine 71 is a catalytic residue. Histidine 73 is a Mn(2+) binding site. Residue glutamate 91 participates in Mg(2+) binding. Residues glutamate 118 and glutamate 120 each contribute to the Mn(2+) site. The active site involves glutamate 120.

The protein belongs to the IPP isomerase type 1 family. The cofactor is Mg(2+). Mn(2+) is required as a cofactor.

The protein resides in the cytoplasm. It catalyses the reaction isopentenyl diphosphate = dimethylallyl diphosphate. It participates in isoprenoid biosynthesis; dimethylallyl diphosphate biosynthesis; dimethylallyl diphosphate from isopentenyl diphosphate: step 1/1. Functionally, catalyzes the 1,3-allylic rearrangement of the homoallylic substrate isopentenyl (IPP) to its highly electrophilic allylic isomer, dimethylallyl diphosphate (DMAPP). The chain is Isopentenyl-diphosphate Delta-isomerase from Kocuria rhizophila (strain ATCC 9341 / DSM 348 / NBRC 103217 / DC2201).